A 694-amino-acid chain; its full sequence is Elongation factor G (694 aa).

Positions 9–288 (SKIRNIGIMA…VIVKWLPSPK (280 aa)) constitute a tr-type G domain. GTP-binding positions include 18–25 (AHIDAGKT), 82–86 (DTPGH), and 136–139 (NKMD).

Belongs to the TRAFAC class translation factor GTPase superfamily. Classic translation factor GTPase family. EF-G/EF-2 subfamily.

The protein resides in the cytoplasm. Functionally, catalyzes the GTP-dependent ribosomal translocation step during translation elongation. During this step, the ribosome changes from the pre-translocational (PRE) to the post-translocational (POST) state as the newly formed A-site-bound peptidyl-tRNA and P-site-bound deacylated tRNA move to the P and E sites, respectively. Catalyzes the coordinated movement of the two tRNA molecules, the mRNA and conformational changes in the ribosome. This Chlamydia caviae (strain ATCC VR-813 / DSM 19441 / 03DC25 / GPIC) (Chlamydophila caviae) protein is Elongation factor G.